Consider the following 249-residue polypeptide: Phosphoribosylaminoimidazole-succinocarboxamide synthase (249 aa).

It belongs to the SAICAR synthetase family.

It catalyses the reaction 5-amino-1-(5-phospho-D-ribosyl)imidazole-4-carboxylate + L-aspartate + ATP = (2S)-2-[5-amino-1-(5-phospho-beta-D-ribosyl)imidazole-4-carboxamido]succinate + ADP + phosphate + 2 H(+). It functions in the pathway purine metabolism; IMP biosynthesis via de novo pathway; 5-amino-1-(5-phospho-D-ribosyl)imidazole-4-carboxamide from 5-amino-1-(5-phospho-D-ribosyl)imidazole-4-carboxylate: step 1/2. This chain is Phosphoribosylaminoimidazole-succinocarboxamide synthase, found in Chloroflexus aurantiacus (strain ATCC 29366 / DSM 635 / J-10-fl).